The sequence spans 499 residues: Glycerol kinase (499 aa).

ADP is bound at residue threonine 13. Threonine 13, threonine 14, and serine 15 together coordinate ATP. Residue threonine 13 coordinates sn-glycerol 3-phosphate. Arginine 17 is an ADP binding site. Sn-glycerol 3-phosphate-binding residues include arginine 83, glutamate 84, tyrosine 135, and aspartate 245. Glycerol is bound by residues arginine 83, glutamate 84, tyrosine 135, aspartate 245, and glutamine 246. 2 residues coordinate ADP: threonine 267 and glycine 310. The ATP site is built by threonine 267, glycine 310, glutamine 314, and glycine 411. ADP contacts are provided by glycine 411 and asparagine 415.

This sequence belongs to the FGGY kinase family.

It catalyses the reaction glycerol + ATP = sn-glycerol 3-phosphate + ADP + H(+). It functions in the pathway polyol metabolism; glycerol degradation via glycerol kinase pathway; sn-glycerol 3-phosphate from glycerol: step 1/1. With respect to regulation, inhibited by fructose 1,6-bisphosphate (FBP). In terms of biological role, key enzyme in the regulation of glycerol uptake and metabolism. Catalyzes the phosphorylation of glycerol to yield sn-glycerol 3-phosphate. The sequence is that of Glycerol kinase from Xanthomonas axonopodis pv. citri (strain 306).